The sequence spans 423 residues: UPF0229 protein VV2350 (423 aa).

Residues 81-111 (QFITGDKIERPKGGQGGGGAGDGDASADGEG) are disordered. Positions 93–102 (GGQGGGGAGD) are enriched in gly residues.

Belongs to the UPF0229 family.

The protein is UPF0229 protein VV2350 of Vibrio vulnificus (strain YJ016).